A 72-amino-acid chain; its full sequence is Translation initiation factor IF-1 (72 aa).

The S1-like domain maps to 1-72 (MAKEENIEMQ…SKGRIIFRAR (72 aa)).

It belongs to the IF-1 family. As to quaternary structure, component of the 30S ribosomal translation pre-initiation complex which assembles on the 30S ribosome in the order IF-2 and IF-3, IF-1 and N-formylmethionyl-tRNA(fMet); mRNA recruitment can occur at any time during PIC assembly.

The protein resides in the cytoplasm. In terms of biological role, one of the essential components for the initiation of protein synthesis. Stabilizes the binding of IF-2 and IF-3 on the 30S subunit to which N-formylmethionyl-tRNA(fMet) subsequently binds. Helps modulate mRNA selection, yielding the 30S pre-initiation complex (PIC). Upon addition of the 50S ribosomal subunit IF-1, IF-2 and IF-3 are released leaving the mature 70S translation initiation complex. The sequence is that of Translation initiation factor IF-1 from Colwellia psychrerythraea (strain 34H / ATCC BAA-681) (Vibrio psychroerythus).